A 576-amino-acid polypeptide reads, in one-letter code: Proline--tRNA ligase (576 aa).

Belongs to the class-II aminoacyl-tRNA synthetase family. ProS type 1 subfamily. In terms of assembly, homodimer.

It is found in the cytoplasm. The catalysed reaction is tRNA(Pro) + L-proline + ATP = L-prolyl-tRNA(Pro) + AMP + diphosphate. Catalyzes the attachment of proline to tRNA(Pro) in a two-step reaction: proline is first activated by ATP to form Pro-AMP and then transferred to the acceptor end of tRNA(Pro). As ProRS can inadvertently accommodate and process non-cognate amino acids such as alanine and cysteine, to avoid such errors it has two additional distinct editing activities against alanine. One activity is designated as 'pretransfer' editing and involves the tRNA(Pro)-independent hydrolysis of activated Ala-AMP. The other activity is designated 'posttransfer' editing and involves deacylation of mischarged Ala-tRNA(Pro). The misacylated Cys-tRNA(Pro) is not edited by ProRS. This chain is Proline--tRNA ligase, found in Pelobacter propionicus (strain DSM 2379 / NBRC 103807 / OttBd1).